Here is a 111-residue protein sequence, read N- to C-terminus: Cell division protein FtsB (111 aa).

Over 1–3 (MGK) the chain is Cytoplasmic. The chain crosses the membrane as a helical span at residues 4-21 (LTLLLLILLGWLQYSLWL). Residues 22–111 (GKNGIHDYVR…TNTPSNNIQR (90 aa)) are Periplasmic-facing. The stretch at 33–63 (KDDVVVQQGNNAKLKDRNEQLFAEIDDLNGG) forms a coiled coil. Positions 90 to 111 (ESNHRNANTAPSTNTPSNNIQR) are disordered. Low complexity predominate over residues 95-111 (NANTAPSTNTPSNNIQR).

It belongs to the FtsB family. As to quaternary structure, part of a complex composed of FtsB, FtsL and FtsQ.

It localises to the cell inner membrane. In terms of biological role, essential cell division protein. May link together the upstream cell division proteins, which are predominantly cytoplasmic, with the downstream cell division proteins, which are predominantly periplasmic. The protein is Cell division protein FtsB of Pectobacterium carotovorum subsp. carotovorum (strain PC1).